A 185-amino-acid polypeptide reads, in one-letter code: Ribosome-recycling factor (185 aa).

This sequence belongs to the RRF family.

It is found in the cytoplasm. Functionally, responsible for the release of ribosomes from messenger RNA at the termination of protein biosynthesis. May increase the efficiency of translation by recycling ribosomes from one round of translation to another. The protein is Ribosome-recycling factor of Mannheimia succiniciproducens (strain KCTC 0769BP / MBEL55E).